The chain runs to 399 residues: Protein phosphatase 2C 37 (399 aa).

Residues 104–389 (KIGTTSVCGR…DNVSVVVVDL (286 aa)) form the PPM-type phosphatase domain. Mn(2+) is bound by residues aspartate 142 and glycine 143. Cysteine 146, histidine 148, cysteine 208, and cysteine 210 together coordinate Zn(2+). 3 residues coordinate Mn(2+): aspartate 327, aspartate 331, and aspartate 380.

This sequence belongs to the PP2C family. In terms of assembly, interacts with AKT2/AKT3. Interacts with ABA-bounded PYR1, PYL1, PYL2, PYL3, PYL4, PYL9 and PYL12, and with free PYL2, PYL3, PYL4 and PYL13. Binds to and inactivates SLAC1 and SRK2E. The inactivation of SRK2E does not require phosphatase activity. Interacts with CBL1, CBL2, CBL3, CBL5, and CBL7, but not CBL4, CBL6, and CBL9. Interacts with RGLG1 and RGLG5. Interacts with KIN10. It depends on Mg(2+) as a cofactor. Mn(2+) serves as cofactor. In terms of processing, ubiquitinated by RGLG1 and RGLG5 in response to abscisic acid (ABA). Ubiquitination of PP2CA leads to its degradation by the proteasome. Mostly expressed in seeds and leaves, and, to a lower extent, in roots, stems, and flowers, particularly in siliques. Essentially found in the phloem.

It catalyses the reaction O-phospho-L-seryl-[protein] + H2O = L-seryl-[protein] + phosphate. It carries out the reaction O-phospho-L-threonyl-[protein] + H2O = L-threonyl-[protein] + phosphate. With respect to regulation, repressed by PYR/PYL/RCAR ABA receptors in an ABA-dependent manner. Major negative regulator of abscisic acid (ABA) responses during seed germination and cold acclimation. Confers insensitivity to ABA. Modulates negatively the AKT2/3 activity, which mediates K(+) transport and membrane polarization during stress situations, probably by dephosphorylation. Prevents stomata closure by inactivating the S-type anion efflux channel SLAC1 and its activator SRK2E. Represses KIN10 activity by the specific dephosphorylation of its T-loop Thr-198, leading to a poststress inactivation of SnRK1 signaling. This Arabidopsis thaliana (Mouse-ear cress) protein is Protein phosphatase 2C 37 (PP2CA).